A 212-amino-acid polypeptide reads, in one-letter code: MTAEASVETLEAALLARAKRLAEEYLSRAQHSRDRIIEEANERLRLREEREILAAKAMAERVYRRQVQASELKLQGKLDRLRWEWVQAVVQNLSHQCKVLATDKSRYLPVLQRLLAAGAAAIEREELIAEINQQDLGRLQETWKTFAAEAVSDKCVVLSSEPLTCSGGVRVVSKDGRIRVDNTFEGRLERLAEELHQSIMERLFVPPSGLHG.

The protein belongs to the V-ATPase E subunit family.

In terms of biological role, produces ATP from ADP in the presence of a proton gradient across the membrane. The chain is V-type ATP synthase subunit E from Nitrosococcus oceani (strain ATCC 19707 / BCRC 17464 / JCM 30415 / NCIMB 11848 / C-107).